Consider the following 400-residue polypeptide: Golgin-45 (400 aa).

The interval 1–36 (MEKMTTLKSFESKGILTSTPIRGAGDGMETEEPPKS) is disordered. The Tankyrase-binding motif motif lies at 22–26 (RGAGD). Ser-53 is modified (phosphoserine). Residues 126-263 (LSEVKKVLEK…LSEREQFRQE (138 aa)) adopt a coiled-coil conformation. The residue at position 356 (Ser-356) is a Phosphoserine. Residues 394–400 (QGELLAL) are essential for interaction with GORASP2.

As to quaternary structure, interacts with GORASP2. Interacts with the GTP-bound form of RAB2, but not with other Golgi Rab proteins. Identified in a complex with RAB2 and GORASP2. ADP-ribosylated by tankyrase TNKS and TNKS2. Poly-ADP-ribosylated protein is recognized by RNF146, followed by ubiquitination. Post-translationally, ubiquitinated by RNF146 when poly-ADP-ribosylated, leading to its degradation.

The protein resides in the golgi apparatus membrane. Functionally, required for normal Golgi structure and for protein transport from the endoplasmic reticulum (ER) through the Golgi apparatus to the cell surface. The chain is Golgin-45 from Rattus norvegicus (Rat).